Here is a 376-residue protein sequence, read N- to C-terminus: Protein-glutamate methylesterase/protein-glutamine glutaminase 1 (376 aa).

The region spanning 4–121 (KVLVVDDSSF…ARNRDEAVSL (118 aa)) is the Response regulatory domain. A 4-aspartylphosphate modification is found at Asp-55. The segment at 138 to 174 (RPVASSTPVQERPQSTLNRPTTGLRREAPAQAPVSRA) is disordered. Residues 141-158 (ASSTPVQERPQSTLNRPT) show a composition bias toward polar residues. A CheB-type methylesterase domain is found at 183–376 (SGKKYQLTAI…ERMLVEVGLA (194 aa)). Residues Ser-195, His-222, and Asp-318 contribute to the active site.

The protein belongs to the CheB family. Phosphorylated by CheA. Phosphorylation of the N-terminal regulatory domain activates the methylesterase activity.

It is found in the cytoplasm. The catalysed reaction is [protein]-L-glutamate 5-O-methyl ester + H2O = L-glutamyl-[protein] + methanol + H(+). It catalyses the reaction L-glutaminyl-[protein] + H2O = L-glutamyl-[protein] + NH4(+). Involved in chemotaxis. Part of a chemotaxis signal transduction system that modulates chemotaxis in response to various stimuli. Catalyzes the demethylation of specific methylglutamate residues introduced into the chemoreceptors (methyl-accepting chemotaxis proteins or MCP) by CheR. Also mediates the irreversible deamidation of specific glutamine residues to glutamic acid. In Vibrio vulnificus (strain CMCP6), this protein is Protein-glutamate methylesterase/protein-glutamine glutaminase 1.